A 569-amino-acid chain; its full sequence is Urease subunit alpha (569 aa).

The Urease domain occupies 131 to 569; that stretch reads GGIDAHIHWI…LPLAQRYFLF (439 aa). The Ni(2+) site is built by histidine 136, histidine 138, and lysine 219. An N6-carboxylysine modification is found at lysine 219. Histidine 221 provides a ligand contact to substrate. Positions 248 and 274 each coordinate Ni(2+). Histidine 322 acts as the Proton donor in catalysis. Aspartate 362 provides a ligand contact to Ni(2+).

This sequence belongs to the metallo-dependent hydrolases superfamily. Urease alpha subunit family. In terms of assembly, heterotrimer of UreA (gamma), UreB (beta) and UreC (alpha) subunits. Three heterotrimers associate to form the active enzyme. Ni cation serves as cofactor. Post-translationally, carboxylation allows a single lysine to coordinate two nickel ions.

It is found in the cytoplasm. It carries out the reaction urea + 2 H2O + H(+) = hydrogencarbonate + 2 NH4(+). It functions in the pathway nitrogen metabolism; urea degradation; CO(2) and NH(3) from urea (urease route): step 1/1. The sequence is that of Urease subunit alpha from Magnetococcus marinus (strain ATCC BAA-1437 / JCM 17883 / MC-1).